The primary structure comprises 371 residues: Carbamoyl phosphate synthase small chain (371 aa).

Residues 1 to 182 (MGVHKKGYLV…KNPIVHTPKN (182 aa)) form a CPSase region. The L-glutamine site is built by Ser49, Gly235, and Gly237. The Glutamine amidotransferase type-1 domain maps to 186 to 371 (RVVVLDLGVK…EFVKILEGRK (186 aa)). The active-site Nucleophile is Cys263. L-glutamine contacts are provided by Leu264, Gln267, Asn305, Gly307, and Tyr308. Catalysis depends on residues His346 and Glu348.

The protein belongs to the CarA family. Composed of two chains; the small (or glutamine) chain promotes the hydrolysis of glutamine to ammonia, which is used by the large (or ammonia) chain to synthesize carbamoyl phosphate. Tetramer of heterodimers (alpha,beta)4.

The catalysed reaction is hydrogencarbonate + L-glutamine + 2 ATP + H2O = carbamoyl phosphate + L-glutamate + 2 ADP + phosphate + 2 H(+). It catalyses the reaction L-glutamine + H2O = L-glutamate + NH4(+). The protein operates within amino-acid biosynthesis; L-arginine biosynthesis; carbamoyl phosphate from bicarbonate: step 1/1. It participates in pyrimidine metabolism; UMP biosynthesis via de novo pathway; (S)-dihydroorotate from bicarbonate: step 1/3. Functionally, small subunit of the glutamine-dependent carbamoyl phosphate synthetase (CPSase). CPSase catalyzes the formation of carbamoyl phosphate from the ammonia moiety of glutamine, carbonate, and phosphate donated by ATP, constituting the first step of 2 biosynthetic pathways, one leading to arginine and/or urea and the other to pyrimidine nucleotides. The small subunit (glutamine amidotransferase) binds and cleaves glutamine to supply the large subunit with the substrate ammonia. The protein is Carbamoyl phosphate synthase small chain of Pyrococcus furiosus (strain ATCC 43587 / DSM 3638 / JCM 8422 / Vc1).